Here is an 873-residue protein sequence, read N- to C-terminus: Alanine--tRNA ligase (873 aa).

Zn(2+) contacts are provided by His-562, His-566, Cys-663, and His-667.

The protein belongs to the class-II aminoacyl-tRNA synthetase family. Requires Zn(2+) as cofactor.

Its subcellular location is the cytoplasm. It carries out the reaction tRNA(Ala) + L-alanine + ATP = L-alanyl-tRNA(Ala) + AMP + diphosphate. Catalyzes the attachment of alanine to tRNA(Ala) in a two-step reaction: alanine is first activated by ATP to form Ala-AMP and then transferred to the acceptor end of tRNA(Ala). Also edits incorrectly charged Ser-tRNA(Ala) and Gly-tRNA(Ala) via its editing domain. This Bordetella petrii (strain ATCC BAA-461 / DSM 12804 / CCUG 43448) protein is Alanine--tRNA ligase.